Reading from the N-terminus, the 335-residue chain is Coiled-coil domain-containing protein 68 (335 aa).

The stretch at 101–305 (QLLEMNKENE…KTQVALSSET (205 aa)) forms a coiled coil.

As to quaternary structure, interacts with CEP170. As to expression, expressed in bone marrow, colon, small intestine, spleen, testis, trachea and cutaneous T-cell lymphoma (CTCL).

The protein resides in the cytoplasm. The protein localises to the cytoskeleton. It localises to the microtubule organizing center. It is found in the centrosome. Its subcellular location is the centriole. In terms of biological role, centriolar protein required for centriole subdistal appendage assembly and microtubule anchoring in interphase cells. Together with CCDC120, cooperate with subdistal appendage components ODF2, NIN and CEP170 for hierarchical subdistal appendage assembly. This Homo sapiens (Human) protein is Coiled-coil domain-containing protein 68 (CCDC68).